Consider the following 353-residue polypeptide: Photosystem II D2 protein (353 aa).

Threonine 2 is modified (N-acetylthreonine). Residue threonine 2 is modified to Phosphothreonine. A helical transmembrane segment spans residues 41 to 61; it reads CAYFAVGGWFTGTTFVTSWYT. Histidine 118 is a chlorophyll a binding site. The chain crosses the membrane as a helical span at residues 125-141; the sequence is GFMLRQFELARSVQLRP. The pheophytin a site is built by glutamine 130 and asparagine 143. A helical transmembrane segment spans residues 153–166; sequence VFVSVFLIYPLGQS. Histidine 198 contributes to the chlorophyll a binding site. Residues 208–228 form a helical membrane-spanning segment; that stretch reads AALLCAIHGATVENTLFEDGD. Positions 215 and 262 each coordinate a plastoquinone. Residue histidine 215 participates in Fe cation binding. Histidine 269 lines the Fe cation pocket. A helical membrane pass occupies residues 279-295; that stretch reads GLWMSALGVVGLALNLR.

Belongs to the reaction center PufL/M/PsbA/D family. As to quaternary structure, PSII is composed of 1 copy each of membrane proteins PsbA, PsbB, PsbC, PsbD, PsbE, PsbF, PsbH, PsbI, PsbJ, PsbK, PsbL, PsbM, PsbT, PsbX, PsbY, PsbZ, Psb30/Ycf12, at least 3 peripheral proteins of the oxygen-evolving complex and a large number of cofactors. It forms dimeric complexes. Requires The D1/D2 heterodimer binds P680, chlorophylls that are the primary electron donor of PSII, and subsequent electron acceptors. It shares a non-heme iron and each subunit binds pheophytin, quinone, additional chlorophylls, carotenoids and lipids. There is also a Cl(-1) ion associated with D1 and D2, which is required for oxygen evolution. The PSII complex binds additional chlorophylls, carotenoids and specific lipids. as cofactor.

The protein localises to the plastid. The protein resides in the chloroplast thylakoid membrane. It catalyses the reaction 2 a plastoquinone + 4 hnu + 2 H2O = 2 a plastoquinol + O2. Its function is as follows. Photosystem II (PSII) is a light-driven water:plastoquinone oxidoreductase that uses light energy to abstract electrons from H(2)O, generating O(2) and a proton gradient subsequently used for ATP formation. It consists of a core antenna complex that captures photons, and an electron transfer chain that converts photonic excitation into a charge separation. The D1/D2 (PsbA/PsbD) reaction center heterodimer binds P680, the primary electron donor of PSII as well as several subsequent electron acceptors. D2 is needed for assembly of a stable PSII complex. This Jasminum nudiflorum (Winter jasmine) protein is Photosystem II D2 protein.